The chain runs to 232 residues: Orotate phosphoribosyltransferase (232 aa).

Residues arginine 107, lysine 108, lysine 111, and 133-141 each bind 5-phospho-alpha-D-ribose 1-diphosphate; that span reads EDLTTDGGS. Threonine 137 contacts orotate.

This sequence belongs to the purine/pyrimidine phosphoribosyltransferase family. PyrE subfamily. Homodimer. Mg(2+) serves as cofactor.

The catalysed reaction is orotidine 5'-phosphate + diphosphate = orotate + 5-phospho-alpha-D-ribose 1-diphosphate. Its pathway is pyrimidine metabolism; UMP biosynthesis via de novo pathway; UMP from orotate: step 1/2. Its function is as follows. Catalyzes the transfer of a ribosyl phosphate group from 5-phosphoribose 1-diphosphate to orotate, leading to the formation of orotidine monophosphate (OMP). In Cereibacter sphaeroides (strain ATCC 17023 / DSM 158 / JCM 6121 / CCUG 31486 / LMG 2827 / NBRC 12203 / NCIMB 8253 / ATH 2.4.1.) (Rhodobacter sphaeroides), this protein is Orotate phosphoribosyltransferase.